Here is a 205-residue protein sequence, read N- to C-terminus: H/ACA ribonucleoprotein complex subunit GAR1 (205 aa).

The span at 1–23 (MSFRGGNRGGRGGFRGGFRGGRT) shows a compositional bias: gly residues. The disordered stretch occupies residues 1 to 31 (MSFRGGNRGGRGGFRGGFRGGRTGSARSFQQ). The residue at position 4 (Arg-4) is an Asymmetric dimethylarginine; by HMT1. The tract at residues 4–21 (RGGNRGGRGGFRGGFRGG) is RGG-box 1. Residue Arg-8 is modified to Asymmetric dimethylarginine; by HMT1; alternate. Arg-8 is modified (omega-N-methylarginine; by HMT1; alternate). Residue Arg-11 is modified to Asymmetric dimethylarginine; by HMT1. Arg-15 carries the asymmetric dimethylarginine; by HMT1; alternate modification. Arg-15 is modified (omega-N-methylarginine; by HMT1; alternate). Arg-19 is subject to Asymmetric dimethylarginine; by HMT1. Residue Lys-77 forms a Glycyl lysine isopeptide (Lys-Gly) (interchain with G-Cter in ubiquitin) linkage. Positions 124 to 205 (PKPKVVGPPK…SRGGFRGGRR (82 aa)) are disordered. Gly residues predominate over residues 143-205 (APGGRGGASM…SRGGFRGGRR (63 aa)). Asymmetric dimethylarginine; by HMT1; alternate occurs at positions 147, 154, and 158. 3 positions are modified to omega-N-methylarginine; by HMT1; alternate: Arg-147, Arg-154, and Arg-158. An RGG-box 2 region spans residues 147-205 (RGGASMGRGGSRGGFRGGRGGSSFRGGRGGSSFRGGSRGGSFRGGSRGGSRGGFRGGRR). At Arg-162 the chain carries Asymmetric dimethylarginine; by HMT1. At Arg-165 the chain carries Asymmetric dimethylarginine; by HMT1; alternate. Position 165 is an omega-N-methylarginine; by HMT1; alternate (Arg-165). Asymmetric dimethylarginine; by HMT1 occurs at positions 171 and 174. 2 positions are modified to omega-N-methylarginine; by HMT1: Arg-180 and Arg-184. An Asymmetric dimethylarginine; by HMT1; alternate modification is found at Arg-189. Arg-189 carries the post-translational modification Omega-N-methylarginine; by HMT1; alternate. Arg-193, Arg-197, and Arg-201 each carry asymmetric dimethylarginine; by HMT1.

It belongs to the GAR1 family. As to quaternary structure, component of the small nucleolar ribonucleoprotein particles containing H/ACA-type snoRNAs (H/ACA snoRNPs). The protein component of the H/ACA snoRNP contains CBF5, GAR1, NHP2 and NOP10. The complex contains a stable core composed of CBF5 and NOP10, to which GAR1 and NHP2 subsequently bind. Interacts with snoRNAs. In terms of processing, methylated by HMT1, forming asymmetric dimethylarginines (DMA) within a domain referred to as an RGG box, made up of repeated Gly-Gly dipeptides interspersed with Arg and aromatic residues.

It localises to the nucleus. It is found in the nucleolus. Non-catalytic component of the H/ACA small nucleolar ribonucleoprotein (H/ACA snoRNP), which catalyzes pseudouridylation of rRNA and is required for ribosome biogenesis. This involves the isomerization of uridine such that the ribose is subsequently attached to C5, instead of the normal N1. Pseudouridine ('psi') residues may serve to stabilize the conformation of rRNAs. The H/ACA snoRNP complex also mediates pseudouridylation of other types of RNAs. The H/ACA snoRNP complex mediates pseudouridylation at position 93 in U2 snRNA. Essential for growth. The polypeptide is H/ACA ribonucleoprotein complex subunit GAR1 (Saccharomyces cerevisiae (strain ATCC 204508 / S288c) (Baker's yeast)).